The primary structure comprises 72 residues: Phaiodotoxin-2 (72 aa).

The LCN-type CS-alpha/beta domain occupies 1–72 (KFIRHKDESF…CFGALESKCA (72 aa)). Intrachain disulfides connect Cys13–Cys38, Cys23–Cys50, Cys27–Cys52, and Cys63–Cys71.

This sequence belongs to the long (4 C-C) scorpion toxin superfamily. Sodium channel inhibitor family. As to expression, expressed by the venom gland.

The protein resides in the secreted. Its function is as follows. Sodium channel (Nav) specific neurotoxin. The protein is Phaiodotoxin-2 of Anuroctonus phaiodactylus (Mafia scorpion).